Reading from the N-terminus, the 99-residue chain is IEVLLGGDDGSLAFIPNDFSVAAGEKIVFKNNAGFPHNVVFDEDEIPSGVDAGKISMNEEDLLNAPGEVYKVNLTEKGSYSFYCSPHQGAGMVGKVTVN.

In terms of domain architecture, Plastocyanin-like spans 1-99 (IEVLLGGDDG…AGMVGKVTVN (99 aa)). Cu cation is bound by residues His37, Cys84, His87, and Met92.

Belongs to the plastocyanin family. Cu(2+) is required as a cofactor.

Its subcellular location is the plastid. The protein resides in the chloroplast thylakoid membrane. Participates in electron transfer between P700 and the cytochrome b6-f complex in photosystem I. This chain is Plastocyanin (PETE), found in Cucurbita pepo (Vegetable marrow).